A 352-amino-acid chain; its full sequence is MSALPIPLLGQSLSALKDWAVAQGQPAYRGQQLHAWIYQKGIRSLEQVTVFPRAWREAVQSYPVGRSRIVQRTEARDGTVKFLLGLADGQLIETVGIPTAKRLTVCVSSQVGCPMACDFCATGKMGYRRNLELHEILDQVLTVQEDFGRRVSHVVFMGMGEPLLNRDTVVQAIRSLNQDIGIGQRHITLSTVGVPRQIAWLAQQDLQVTLAVSLHAPNQDLRQRLIPSASHYPLDTLIQDCRDYMLRTGRRVSFEYTLLSGVNDLPIHARQLAQLLQQASRSGVQLHVNLIPYNPISEADYQRPHPTRVREFVRQLEQHQVRATVRQTRGLDGNAACGQLRGSFLRSLPGDL.

Glutamate 93 (proton acceptor) is an active-site residue. In terms of domain architecture, Radical SAM core spans 99–332 (TAKRLTVCVS…ATVRQTRGLD (234 aa)). Cysteine 106 and cysteine 337 are joined by a disulfide. Residues cysteine 113, cysteine 117, and cysteine 120 each coordinate [4Fe-4S] cluster. Residues 160–161 (GE), serine 190, 213–215 (SLH), and asparagine 294 each bind S-adenosyl-L-methionine. The active-site S-methylcysteine intermediate is the cysteine 337.

The protein belongs to the radical SAM superfamily. RlmN family. [4Fe-4S] cluster serves as cofactor.

It localises to the cytoplasm. It catalyses the reaction adenosine(2503) in 23S rRNA + 2 reduced [2Fe-2S]-[ferredoxin] + 2 S-adenosyl-L-methionine = 2-methyladenosine(2503) in 23S rRNA + 5'-deoxyadenosine + L-methionine + 2 oxidized [2Fe-2S]-[ferredoxin] + S-adenosyl-L-homocysteine. It carries out the reaction adenosine(37) in tRNA + 2 reduced [2Fe-2S]-[ferredoxin] + 2 S-adenosyl-L-methionine = 2-methyladenosine(37) in tRNA + 5'-deoxyadenosine + L-methionine + 2 oxidized [2Fe-2S]-[ferredoxin] + S-adenosyl-L-homocysteine. Functionally, specifically methylates position 2 of adenine 2503 in 23S rRNA and position 2 of adenine 37 in tRNAs. The polypeptide is Probable dual-specificity RNA methyltransferase RlmN (Synechococcus sp. (strain JA-2-3B'a(2-13)) (Cyanobacteria bacterium Yellowstone B-Prime)).